The sequence spans 147 residues: Ribonuclease H (147 aa).

One can recognise an RNase H type-1 domain in the interval 1–142 (MREVIIYTDG…CDELARAAIA (142 aa)). Mg(2+) contacts are provided by Asp9, Glu47, Asp69, and Asp134.

Belongs to the RNase H family. In terms of assembly, monomer. The cofactor is Mg(2+).

It localises to the cytoplasm. The catalysed reaction is Endonucleolytic cleavage to 5'-phosphomonoester.. In terms of biological role, endonuclease that specifically degrades the RNA of RNA-DNA hybrids. The polypeptide is Ribonuclease H (Symbiobacterium thermophilum (strain DSM 24528 / JCM 14929 / IAM 14863 / T)).